The primary structure comprises 1456 residues: Ig-like and fibronectin type-III domain-containing protein C27B7.7 (1456 aa).

The signal sequence occupies residues 1 to 16 (MISLSLVLLLLFGVRC). 2 Fibronectin type-III domains span residues 24–128 (NDDS…SINT) and 132–227 (IPKA…TNST). Residues Asn64, Asn146, Asn164, Asn198, and Asn225 are each glycosylated (N-linked (GlcNAc...) asparagine). The Ig-like 1 domain occupies 236 to 322 (PDEEYTADPQ…DAGDSSKEVN (87 aa)). Cysteines 254 and 308 form a disulfide. Residues 328–426 (PGSPPSEITL…VAMERDTQPI (99 aa)) form the Fibronectin type-III 3 domain. Asn471, Asn497, and Asn517 each carry an N-linked (GlcNAc...) asparagine glycan. Fibronectin type-III domains are found at residues 531-631 (APTQ…TLNG), 636-736 (PPDN…TAYS), and 737-846 (EVPI…WFRT). N-linked (GlcNAc...) asparagine glycosylation is found at Asn658, Asn691, and Asn692. The region spanning 841–948 (PRWFRTGHGK…GSSSASVEIR (108 aa)) is the Ig-like 2 domain. The cysteines at positions 877 and 932 are disulfide-linked. N-linked (GlcNAc...) asparagine glycosylation is found at Asn893, Asn898, Asn969, Asn1091, Asn1120, Asn1133, Asn1151, Asn1207, Asn1268, Asn1277, Asn1298, Asn1350, Asn1357, and Asn1382. Residues 955-1050 (PPENIILTAY…SCISDVLYET (96 aa)) enclose the Fibronectin type-III 7 domain. 3 Fibronectin type-III domains span residues 1148 to 1234 (APTN…TPNG), 1236 to 1343 (PKTA…ISFD), and 1347 to 1438 (VIDN…SSPS). The tract at residues 1419 to 1456 (LGRESPPSEEIDLEFISSPSPTPIISGSRRKVIKEPPL) is disordered. The segment covering 1434 to 1445 (ISSPSPTPIISG) has biased composition (low complexity).

Its subcellular location is the secreted. This Caenorhabditis elegans protein is Ig-like and fibronectin type-III domain-containing protein C27B7.7.